A 266-amino-acid chain; its full sequence is Type III pantothenate kinase (266 aa).

9–16 serves as a coordination point for ATP; sequence DAGNSRIK. Substrate is bound by residues Y96 and 103–106; that span reads GSDR. Catalysis depends on D105, which acts as the Proton acceptor. T129 provides a ligand contact to ATP. T189 contributes to the substrate binding site.

It belongs to the type III pantothenate kinase family. As to quaternary structure, homodimer. Requires NH4(+) as cofactor. K(+) is required as a cofactor.

It is found in the cytoplasm. The catalysed reaction is (R)-pantothenate + ATP = (R)-4'-phosphopantothenate + ADP + H(+). The protein operates within cofactor biosynthesis; coenzyme A biosynthesis; CoA from (R)-pantothenate: step 1/5. Its function is as follows. Catalyzes the phosphorylation of pantothenate (Pan), the first step in CoA biosynthesis. This is Type III pantothenate kinase from Burkholderia lata (strain ATCC 17760 / DSM 23089 / LMG 22485 / NCIMB 9086 / R18194 / 383).